We begin with the raw amino-acid sequence, 271 residues long: MPELPEVEVTRRSFAGAIEGATVRGITVGKPLRWPLGTEPAVLVGRRVCGVRRRGKYLLLDLDEGLLLIHLGMSGSLRFARDLPARGAHDHFELITDQGTLRLHDPRRFGAVVWAAGESDPRARKLLDGWGLEPLGEDFAFETFHAGLRAKRTPIKQLLLAGTVVVGVGNIYACEVLFLAGIRPTTRACAIGPQRARRLHGAIREVLARAVERGGSTLRDFSSADGSAGHFQLEANVYGRAGLPCRQCGTPVRLLRQGQRSTYFCPHCQRA.

The Schiff-base intermediate with DNA role is filled by Pro2. Glu3 acts as the Proton donor in catalysis. The active-site Proton donor; for beta-elimination activity is Lys56. DNA-binding residues include His89, Arg107, and Lys151. An FPG-type zinc finger spans residues 236–270 (NVYGRAGLPCRQCGTPVRLLRQGQRSTYFCPHCQR). The Proton donor; for delta-elimination activity role is filled by Arg260.

Belongs to the FPG family. Monomer. Zn(2+) is required as a cofactor.

It carries out the reaction Hydrolysis of DNA containing ring-opened 7-methylguanine residues, releasing 2,6-diamino-4-hydroxy-5-(N-methyl)formamidopyrimidine.. It catalyses the reaction 2'-deoxyribonucleotide-(2'-deoxyribose 5'-phosphate)-2'-deoxyribonucleotide-DNA = a 3'-end 2'-deoxyribonucleotide-(2,3-dehydro-2,3-deoxyribose 5'-phosphate)-DNA + a 5'-end 5'-phospho-2'-deoxyribonucleoside-DNA + H(+). Functionally, involved in base excision repair of DNA damaged by oxidation or by mutagenic agents. Acts as a DNA glycosylase that recognizes and removes damaged bases. Has a preference for oxidized purines, such as 7,8-dihydro-8-oxoguanine (8-oxoG). Has AP (apurinic/apyrimidinic) lyase activity and introduces nicks in the DNA strand. Cleaves the DNA backbone by beta-delta elimination to generate a single-strand break at the site of the removed base with both 3'- and 5'-phosphates. This chain is Formamidopyrimidine-DNA glycosylase, found in Acidovorax sp. (strain JS42).